Consider the following 197-residue polypeptide: dITP/XTP pyrophosphatase (197 aa).

7–12 provides a ligand contact to substrate; it reads TGNEQK. Residues Glu44 and Asp73 each contribute to the Mg(2+) site. Asp73 (proton acceptor) is an active-site residue. Residues Thr74, 156–159, Lys179, and 184–185 contribute to the substrate site; these read FGYD and HR.

The protein belongs to the HAM1 NTPase family. As to quaternary structure, homodimer. The cofactor is Mg(2+).

It carries out the reaction XTP + H2O = XMP + diphosphate + H(+). The catalysed reaction is dITP + H2O = dIMP + diphosphate + H(+). The enzyme catalyses ITP + H2O = IMP + diphosphate + H(+). Pyrophosphatase that catalyzes the hydrolysis of nucleoside triphosphates to their monophosphate derivatives, with a high preference for the non-canonical purine nucleotides XTP (xanthosine triphosphate), dITP (deoxyinosine triphosphate) and ITP. Seems to function as a house-cleaning enzyme that removes non-canonical purine nucleotides from the nucleotide pool, thus preventing their incorporation into DNA/RNA and avoiding chromosomal lesions. The protein is dITP/XTP pyrophosphatase of Elusimicrobium minutum (strain Pei191).